We begin with the raw amino-acid sequence, 115 residues long: NADH-ubiquinone oxidoreductase chain 3 (115 aa).

3 helical membrane passes run 3 to 23, 55 to 75, and 84 to 104; these read LLMA…IAFW, FFLV…LLPL, and LSAM…GLMY.

It belongs to the complex I subunit 3 family. As to quaternary structure, core subunit of respiratory chain NADH dehydrogenase (Complex I) which is composed of 45 different subunits. Interacts with TMEM186. Interacts with TMEM242.

The protein resides in the mitochondrion inner membrane. The catalysed reaction is a ubiquinone + NADH + 5 H(+)(in) = a ubiquinol + NAD(+) + 4 H(+)(out). Functionally, core subunit of the mitochondrial membrane respiratory chain NADH dehydrogenase (Complex I) which catalyzes electron transfer from NADH through the respiratory chain, using ubiquinone as an electron acceptor. Essential for the catalytic activity of complex I. In Sigmodon ochrognathus (Yellow-nosed cotton rat), this protein is NADH-ubiquinone oxidoreductase chain 3.